A 295-amino-acid chain; its full sequence is MAVLAPLIALVYSVPRLSRWLARPYCLLSALLSIAFLLVRKLPPICNGLPTQREDGNPCDFDWREVEILMFLSAIVMMKNRRSITVEQHVGNIFMFSKVANAILFFRLDIRMGLLYLTLCIVFLMTCKPPLYMGPEYIKYFNDKTIDEELERDKRVTWIVEFFANWSNDCQSFAPIYADLSLKYNCSGLNFGKVDVGRYTDVSTRYKVSTSPLTKQLPTLILFQGGKEVMRRPQIDKKGRAVSWTFSEENVIREFNLNELYQRAKKLSKGGDMSEEKPGNPTPTAVPDGENKKDK.

The N-terminal stretch at 1 to 48 (MAVLAPLIALVYSVPRLSRWLARPYCLLSALLSIAFLLVRKLPPICNG) is a signal peptide. Over 49 to 102 (LPTQREDGNPCDFDWREVEILMFLSAIVMMKNRRSITVEQHVGNIFMFSKVANA) the chain is Extracellular. Residues 103–125 (ILFFRLDIRMGLLYLTLCIVFLM) form a helical membrane-spanning segment. The Thioredoxin domain maps to 114-269 (LLYLTLCIVF…LYQRAKKLSK (156 aa)). Topologically, residues 126-295 (TCKPPLYMGP…VPDGENKKDK (170 aa)) are cytoplasmic. 2 positions are modified to phosphoserine: serine 211 and serine 243. Residues 266–295 (KLSKGGDMSEEKPGNPTPTAVPDGENKKDK) are disordered. Residues 292–295 (KKDK) carry the Di-lysine motif motif.

Monomer. Homodimer; disulfide-linked. Occurs in both reduced and oxidized monomeric form. Oxidative conditions increase homodimerization. Interacts with CANX. Interacts with ATP2A2.

It is found in the endoplasmic reticulum membrane. Its subcellular location is the mitochondrion membrane. Functionally, endoplasmic reticulum and mitochondria-associated protein that probably functions as a regulator of cellular redox state and thereby regulates protein post-translational modification, protein folding and mitochondrial activity. Indirectly regulates neuronal proliferation, migration, and organization in the developing brain. This Rattus norvegicus (Rat) protein is Thioredoxin-related transmembrane protein 2 (Tmx2).